A 238-amino-acid polypeptide reads, in one-letter code: U2 small nuclear ribonucleoprotein A' (238 aa).

LRR repeat units follow at residues 53-74, 75-95, and 97-118; these read PTHILDLTNNDLIMIPDLSRRD, DIHTLLLGRNNIVEVDGRLLP, and NVQNLTLSNNSIRRFEDLQRLR. In terms of domain architecture, LRRCT spans 132 to 170; that stretch reads NQVCHLANYREHVLRLVPHLETLDFQNVTAEERKSAMSF. The tract at residues 167 to 189 is disordered; the sequence is AMSFPRQADGDTLGPVNTAIRDN.

It belongs to the U2 small nuclear ribonucleoprotein A family. In terms of assembly, belongs to the CWC complex (or CEF1-associated complex), a spliceosome sub-complex reminiscent of a late-stage spliceosome composed of the U2, U5 and U6 snRNAs and at least BUD13, BUD31, BRR2, CDC40, CEF1, CLF1, CUS1, CWC2, CWC15, CWC21, CWC22, CWC23, CWC24, CWC25, CWC27, ECM2, HSH155, IST3, ISY1, LEA1, MSL1, NTC20, PRP8, PRP9, PRP11, PRP19, PRP21, PRP22, PRP45, PRP46, SLU7, SMB1, SMD1, SMD2, SMD3, SMX2, SMX3, SNT309, SNU114, SPP2, SYF1, SYF2, RSE1 and YJU2. Interacts with MSL1.

It localises to the nucleus. Involved in pre-mRNA splicing. Associates to U2 snRNA in a MSL1 dependent manner and is required for normal accumulation of U2 snRNA. Required for the spliceosome assembly and the efficient addition of U2 snRNP onto the pre-mRNA. The polypeptide is U2 small nuclear ribonucleoprotein A' (LEA1) (Saccharomyces cerevisiae (strain ATCC 204508 / S288c) (Baker's yeast)).